Here is a 666-residue protein sequence, read N- to C-terminus: Translation factor guf1, mitochondrial (666 aa).

The transit peptide at 1-44 (MRGCLQLGRWLSAAPRCQAASLRPPTVFPSYRYNRSFSTTTIYY) directs the protein to the mitochondrion. A tr-type G domain is found at 68-248 (ERFRNFCIVA…TVVEKVPAPI (181 aa)). GTP contacts are provided by residues 77–84 (AHVDHGKS), 141–145 (DTPGH), and 195–198 (NKVD).

This sequence belongs to the TRAFAC class translation factor GTPase superfamily. Classic translation factor GTPase family. LepA subfamily.

Its subcellular location is the mitochondrion inner membrane. It carries out the reaction GTP + H2O = GDP + phosphate + H(+). In terms of biological role, promotes mitochondrial protein synthesis. May act as a fidelity factor of the translation reaction, by catalyzing a one-codon backward translocation of tRNAs on improperly translocated ribosomes. Binds to mitochondrial ribosomes in a GTP-dependent manner. This is Translation factor guf1, mitochondrial (guf1) from Penicillium rubens (strain ATCC 28089 / DSM 1075 / NRRL 1951 / Wisconsin 54-1255) (Penicillium chrysogenum).